Consider the following 322-residue polypeptide: uncharacterized protein (322 aa).

Residues 1-13 (MTNADEQNMGQQE) show a composition bias toward polar residues. 2 disordered regions span residues 1–94 (MTNA…EEYE) and 125–322 (RREM…TDEE). Low complexity predominate over residues 14-31 (GTDTATTAQDTNTQTVGT). Residues 32–50 (QSENTQNTQQASDAQTEQT) are compositionally biased toward polar residues. Positions 64 to 75 (EVDEDDVLDAQE) are enriched in acidic residues. 4 stretches are compositionally biased toward basic and acidic residues: residues 141 to 227 (GGDR…RGGD), 235 to 269 (RPRE…RGGD), 277 to 295 (RPRE…RTDD), and 308 to 322 (ARAD…TDEE).

This is an uncharacterized protein from Deinococcus radiodurans (strain ATCC 13939 / DSM 20539 / JCM 16871 / CCUG 27074 / LMG 4051 / NBRC 15346 / NCIMB 9279 / VKM B-1422 / R1).